The following is a 157-amino-acid chain: DNA gyrase inhibitor (157 aa).

It belongs to the DNA gyrase inhibitor family. In terms of assembly, interacts with DNA gyrase.

It is found in the cytoplasm. Functionally, inhibits the supercoiling activity of DNA gyrase. Acts by inhibiting DNA gyrase at an early step, prior to (or at the step of) binding of DNA by the gyrase. It protects cells against toxins that target DNA gyrase, by inhibiting activity of these toxins and reducing the formation of lethal double-strand breaks in the cell. This Shigella boydii serotype 18 (strain CDC 3083-94 / BS512) protein is DNA gyrase inhibitor.